Here is a 210-residue protein sequence, read N- to C-terminus: Natriuretic peptide BM026 (210 aa).

Positions 1–26 (MVGPSRLAGGGLLLLLLALLPVALDG) are cleaved as a signal peptide. Residues 83 to 99 (CFGHKIDRISHSSGMGC) form a natriuretic peptide domain 1 region. The cysteines at positions 83 and 99 are disulfide-linked. The segment covering 122-134 (ESKKSRAARDRMV) has biased composition (basic and acidic residues). Residues 122–210 (ESKKSRAARD…QFNSKSSQVA (89 aa)) form a disordered region. Gly residues predominate over residues 140–150 (AGGGGGGGGGD). Residues 156–176 (ELAKKDQHNNCFGRRIDRISH) show a composition bias toward basic and acidic residues. The natriuretic peptide domain 2 stretch occupies residues 166–182 (CFGRRIDRISHSTDLGC). Cysteines 166 and 182 form a disulfide. Residues 201–210 (QFNSKSSQVA) are compositionally biased toward polar residues.

It belongs to the natriuretic peptide family. As to expression, expressed by the venom gland.

Its subcellular location is the secreted. Its function is as follows. Natriuretic peptide that dose-dependently induces the rapid relaxation of rat aortic strips phenylephrine-precontracted. Acts by stimulating cGMP production in a dose-dependent manner (by probably activating NPR1 and/or NPR2). May also show potent hypotensive effects. In Bungarus multicinctus (Many-banded krait), this protein is Natriuretic peptide BM026.